Reading from the N-terminus, the 458-residue chain is Selection and upkeep of intraepithelial T-cells protein 3 (458 aa).

The N-terminal stretch at 1-24 (MGSIQIIFAAYCVVLCVLQMLVLS) is a signal peptide. Residues 25-237 (SEQFTITGLE…ESISIVLTGD (213 aa)) lie on the Extracellular side of the membrane. The Ig-like V-type domain occupies 26-141 (EQFTITGLER…EEHITEVKVT (116 aa)). 2 cysteine pairs are disulfide-bonded: Cys-49–Cys-123 and Cys-163–Cys-217. An Ig-like C1-type domain is found at 142–231 (ATSSDIKIIM…LLTHQEESIS (90 aa)). N-linked (GlcNAc...) asparagine glycosylation is present at Asn-200. A helical membrane pass occupies residues 238 to 258 (LFSWKIDWILILSIIACVMIP). Over 259–283 (YSMTSYLQQHLIHGSCSQRSHHWRK) the chain is Cytoplasmic. The helical transmembrane segment at 284–304 (NAMVCMSSVIAIIGSMLILHL) threads the bilayer. The Extracellular segment spans residues 305-324 (KQRVPISDQHFELDTLYLED). Residues 325–345 (ISVILCVVIVFNLKLNLLTYY) traverse the membrane as a helical segment. The Cytoplasmic segment spans residues 346-359 (RLERKYDGCTPGCK). A helical transmembrane segment spans residues 360–380 (ACFYILKIIIIILPFVFTFGC). Residues 381–414 (YNAIFLKYHQLQKKVSIPDPLYYFYTSWLVNMEM) lie on the Extracellular side of the membrane. The helical transmembrane segment at 415–435 (LGVFLVFFPTFINLIEFSQFI) threads the bilayer. The Cytoplasmic portion of the chain corresponds to 436-458 (KTVPKPIWLCQENMREDDAIRHR).

This sequence belongs to the SKINT family. In terms of tissue distribution, expressed in skin and thymus.

The protein localises to the membrane. Its function is as follows. May act by engaging a cell surface molecule on immature T-cells in the embryonic thymus. The protein is Selection and upkeep of intraepithelial T-cells protein 3 (Skint3) of Mus musculus (Mouse).